Here is a 316-residue protein sequence, read N- to C-terminus: Peroxisomal targeting signal 2 receptor (316 aa).

6 WD repeats span residues 56–96, 102–142, 145–185, 188–228, 232–272, and 277–316; these read DTRD…GGRP, EHTK…SLKT, EHRY…SLNT, AHDH…RPTT, GHTY…DPII, and HHTE…GQFR.

This sequence belongs to the WD repeat peroxin-7 family. In terms of assembly, interacts with PEX5; interaction only takes place when PEX7 is associated with cargo proteins.

The protein resides in the cytoplasm. The protein localises to the cytosol. Its subcellular location is the peroxisome matrix. Receptor required for the peroxisomal import of proteins containing a C-terminal PTS2-type peroxisomal targeting signal. Specifically binds to cargo proteins containing a PTS2 peroxisomal targeting signal in the cytosol. Cargo protein-binding triggers interaction with PEX5 and formation of a ternary complex composed of PEX5 and PEX7 along with PTS2-containing cargo proteins, which is tranlocated into peroxisomes by passing through the PEX13-PEX14 docking complex. The chain is Peroxisomal targeting signal 2 receptor (pex7) from Dictyostelium discoideum (Social amoeba).